The primary structure comprises 300 residues: N-acetylmuramic acid 6-phosphate etherase (300 aa).

Residues 57 to 220 (VAAALRAGGR…STGAMIRIGK (164 aa)) form the SIS domain. The active-site Proton donor is Glu-85. Glu-116 is an active-site residue.

Belongs to the GCKR-like family. MurNAc-6-P etherase subfamily. Homodimer.

It catalyses the reaction N-acetyl-D-muramate 6-phosphate + H2O = N-acetyl-D-glucosamine 6-phosphate + (R)-lactate. It functions in the pathway amino-sugar metabolism; 1,6-anhydro-N-acetylmuramate degradation. It participates in amino-sugar metabolism; N-acetylmuramate degradation. The protein operates within cell wall biogenesis; peptidoglycan recycling. Its function is as follows. Specifically catalyzes the cleavage of the D-lactyl ether substituent of MurNAc 6-phosphate, producing GlcNAc 6-phosphate and D-lactate. Together with AnmK, is also required for the utilization of anhydro-N-acetylmuramic acid (anhMurNAc) either imported from the medium or derived from its own cell wall murein, and thus plays a role in cell wall recycling. The polypeptide is N-acetylmuramic acid 6-phosphate etherase (Klebsiella aerogenes (Enterobacter aerogenes)).